Consider the following 103-residue polypeptide: Large ribosomal subunit protein bL21 (103 aa).

The protein belongs to the bacterial ribosomal protein bL21 family. As to quaternary structure, part of the 50S ribosomal subunit. Contacts protein L20.

Functionally, this protein binds to 23S rRNA in the presence of protein L20. The sequence is that of Large ribosomal subunit protein bL21 from Ruthia magnifica subsp. Calyptogena magnifica.